Here is a 105-residue protein sequence, read N- to C-terminus: Secreted effector protein PINE1 (105 aa).

Residues 1–21 form the signal peptide; it reads MKLSQPLSIFAILAASTVAVA.

Interacts with Arabidopsis thaliana PGIP1.

Its subcellular location is the secreted. In terms of biological role, effector protein required for full virulence. Directly interacts with and functionally inactivates PG-inhibiting proteins (PGIPs). PGIPs are a defense mechanism of infected plants, that inhibit the plant pathogens secreted polygalacturonases (PGs) used to degrade the plant cell wall. Excerts its function by interacting with host PGIPs to negate their polygalacturonase-inhibiting function via enhanced dissociation of PGIPs from PGs. The sequence is that of Secreted effector protein PINE1 from Sclerotinia sclerotiorum (strain ATCC 18683 / 1980 / Ss-1) (White mold).